A 448-amino-acid polypeptide reads, in one-letter code: Methylenetetrahydrofolate--tRNA-(uracil-5-)-methyltransferase TrmFO (448 aa).

Position 13-18 (13-18) interacts with FAD; it reads GAGLAG.

Belongs to the MnmG family. TrmFO subfamily. Requires FAD as cofactor.

The protein resides in the cytoplasm. It carries out the reaction uridine(54) in tRNA + (6R)-5,10-methylene-5,6,7,8-tetrahydrofolate + NADH + H(+) = 5-methyluridine(54) in tRNA + (6S)-5,6,7,8-tetrahydrofolate + NAD(+). The catalysed reaction is uridine(54) in tRNA + (6R)-5,10-methylene-5,6,7,8-tetrahydrofolate + NADPH + H(+) = 5-methyluridine(54) in tRNA + (6S)-5,6,7,8-tetrahydrofolate + NADP(+). In terms of biological role, catalyzes the folate-dependent formation of 5-methyl-uridine at position 54 (M-5-U54) in all tRNAs. This is Methylenetetrahydrofolate--tRNA-(uracil-5-)-methyltransferase TrmFO from Streptococcus pyogenes serotype M6 (strain ATCC BAA-946 / MGAS10394).